A 398-amino-acid chain; its full sequence is Inositol polyphosphate 5-phosphatase (398 aa).

It belongs to the inositol 1,4,5-trisphosphate 5-phosphatase type II family. Expressed in tail, cilia, dendrites, axon and male head.

It is found in the cytoplasm. In terms of biological role, dephosphorylates a number of phosphatidylinositols. Controls the cellular levels and subcellular distribution of phosphatidylinositol 3,5-bisphosphate and phosphatidylinositol 3,4,5-trisphosphate. Has a role in sperm activation and motility. Influences the localization of the transient receptor potential polycystin (TRPP) complex proteins lov-1 and pkd-2. The chain is Inositol polyphosphate 5-phosphatase from Caenorhabditis elegans.